Consider the following 206-residue polypeptide: Ras-related protein ralB-B (206 aa).

Residue 21–28 (GSGGVGKS) participates in GTP binding. An Effector region motif is present at residues 43–51 (YEPTKADSY). GTP-binding positions include 68–72 (DTAGQ) and 128–131 (NKSD). Basic and acidic residues predominate over residues 180–189 (KMSENKDKNG). The disordered stretch occupies residues 180-206 (KMSENKDKNGKKSGKSKKGFKQRCCLL). Positions 190–200 (KKSGKSKKGFK) are enriched in basic residues. A Cysteine methyl ester modification is found at Cys203. Cys203 is lipidated: S-geranylgeranyl cysteine. Residues 204–206 (CLL) constitute a propeptide, removed in mature form.

The protein belongs to the small GTPase superfamily. Ras family. In terms of assembly, interacts with ralbp1 and rap1gds1.

It is found in the cell membrane. The protein localises to the midbody. The catalysed reaction is GTP + H2O = GDP + phosphate + H(+). In terms of biological role, multifunctional GTPase involved in a variety of cellular processes including gene expression, cell migration, cell proliferation, oncogenic transformation and membrane trafficking. Accomplishes its multiple functions by interacting with distinct downstream effectors. Acts as a GTP sensor for GTP-dependent exocytosis of dense core vesicles. Required both to stabilize the assembly of the exocyst complex and to localize functional exocyst complexes to the leading edge of migrating cells. Required for suppression of apoptosis. In late stages of cytokinesis, upon completion of the bridge formation between dividing cells, mediates exocyst recruitment to the midbody to drive abscission. Regulates the actin cytoskeleton to play a role in gastrulation or neurulation. During the cleavage stages, the GTP-bound form induces a cortical reaction that affects the localization of pigment granules. Activated by the FGF pathway via ras and ral-GDS, but independently of raf. Directs ralbp1 to the plasma membrane. Involved in ligand-dependent receptor mediated endocytosis of the EGF and insulin receptors. The protein is Ras-related protein ralB-B (ralb-b) of Xenopus laevis (African clawed frog).